Consider the following 544-residue polypeptide: Methionine--tRNA ligase (544 aa).

The short motif at 10–20 (PYANGSLHLGH) is the 'HIGH' region element. Positions 141, 144, 153, and 156 each coordinate Zn(2+). The 'KMSKS' region signature appears at 329-333 (KLSTS). ATP is bound at residue Thr-332.

This sequence belongs to the class-I aminoacyl-tRNA synthetase family. MetG type 1 subfamily. As to quaternary structure, monomer. The cofactor is Zn(2+).

The protein resides in the cytoplasm. It carries out the reaction tRNA(Met) + L-methionine + ATP = L-methionyl-tRNA(Met) + AMP + diphosphate. Its function is as follows. Is required not only for elongation of protein synthesis but also for the initiation of all mRNA translation through initiator tRNA(fMet) aminoacylation. This is Methionine--tRNA ligase from Bacillus cereus (strain Q1).